Here is a 216-residue protein sequence, read N- to C-terminus: Adenylate kinase (216 aa).

Residue 10–15 (GAGKGT) participates in ATP binding. Residues 30-59 (STGDMLRAAVKAGTKLGQQVQGIMAAGKLV) form an NMP region. AMP is bound by residues Thr-31, Arg-36, 57–59 (KLV), 85–88 (GFPR), and Gln-92. Residues 122–159 (GRRVHMPSGRIYHLKFNPPKITDKDDMTGESLTLRKDD) are LID. ATP contacts are provided by residues Arg-123 and 132 to 133 (IY). Arg-156 and Arg-167 together coordinate AMP. Arg-200 contacts ATP.

This sequence belongs to the adenylate kinase family. Monomer.

Its subcellular location is the cytoplasm. The enzyme catalyses AMP + ATP = 2 ADP. It functions in the pathway purine metabolism; AMP biosynthesis via salvage pathway; AMP from ADP: step 1/1. Catalyzes the reversible transfer of the terminal phosphate group between ATP and AMP. Plays an important role in cellular energy homeostasis and in adenine nucleotide metabolism. This Hamiltonella defensa subsp. Acyrthosiphon pisum (strain 5AT) protein is Adenylate kinase.